The sequence spans 423 residues: Glucose-1-phosphate adenylyltransferase (423 aa).

Residues Y107, G172, 187-188 (EK), and S205 contribute to the alpha-D-glucose 1-phosphate site.

Belongs to the bacterial/plant glucose-1-phosphate adenylyltransferase family. Homotetramer.

The catalysed reaction is alpha-D-glucose 1-phosphate + ATP + H(+) = ADP-alpha-D-glucose + diphosphate. The protein operates within glycan biosynthesis; glycogen biosynthesis. Involved in the biosynthesis of ADP-glucose, a building block required for the elongation reactions to produce glycogen. Catalyzes the reaction between ATP and alpha-D-glucose 1-phosphate (G1P) to produce pyrophosphate and ADP-Glc. This chain is Glucose-1-phosphate adenylyltransferase, found in Cereibacter sphaeroides (strain ATCC 17029 / ATH 2.4.9) (Rhodobacter sphaeroides).